The sequence spans 623 residues: Zinc finger protein 143 (623 aa).

7 C2H2-type zinc fingers span residues 230–254, 260–284, 290–314, 320–344, 350–374, 380–404, and 410–433; these read FRCEHEGCGKLYTTAHHLKVHERSH, YICDHLGCGKKFATGYGLKSHVRTH, YRCQELNCLKSFKTSGDLQKHTRTH, FKCPFEGCGRSFTTSNIRKVHIRTH, YYCAEPNCGRAFASATNYKNHMRIH, YVCTVPGCDKRFTEYSSLYKHHVVH, and YNCNHCGKTYKQISTLAMHKRTAH.

It belongs to the GLI C2H2-type zinc-finger protein family.

The protein resides in the nucleus. Functionally, transcriptional activator. Activates the gene for selenocysteine tRNA (tRNAsec). Binds to the activator element (AE) motif of the selenocysteine tRNA gene promoter. The protein is Zinc finger protein 143 (znf143) of Danio rerio (Zebrafish).